Here is a 618-residue protein sequence, read N- to C-terminus: MRTLWRFIAGFFKWTWRVLNFVREMVLNLFFIFLVLVGVGIWMQIGNGSNSEQTARGALLLDISGVIVDKPSTNHRLGALGRQLFGASSDRLQENSLFDIVNAIRQAKDDRNITGIVLDLKNFTGADQPSMRYIGKALREFRDSGKPVFAVGENYSQGQYYLASFANKIWLSPQGQVDLHGFATNGLYYKTLLDKLKVSTHVFRVGTYKSAVEPFIRDDMSPAAREADSRWIGELWQNYLHTVSANRQISPQQLFPGAQAIIDGLTSVGGDTAKYALDHKLVDALASSADVEKALTKQFGWSKTENNYRAISYYDYSLKTPADTGGTIAVIFANGAIMDGEETPGNVGGDTTASQIRDARLDPKVKAIVLRVNSPGGSVNASEVIRAELAAARAAGKPVVVSMGGMAASGGYWISTPANYIVASPSTLTGSIGIFGVINTVENSLSSIGVHSDGVSTSPLADISMTKALSPEVQQMMQLSIEYGYKRFITLVADARKRTPEQIDKIAQGHVWTGEDAKANGLVDSLGDFDDAVAKAAELAKLKQWHLDYYQDEPTVLDMVMDSMTGSVRAMLPEAIQAMLPAPLVSAANTVKAEGDKLAAFNDPQNRYAFCLTCANVR.

Residues 1–24 (MRTLWRFIAGFFKWTWRVLNFVRE) lie on the Cytoplasmic side of the membrane. A helical transmembrane segment spans residues 25-45 (MVLNLFFIFLVLVGVGIWMQI). At 46-618 (GNGSNSEQTA…AFCLTCANVR (573 aa)) the chain is on the periplasmic side. Lysine 209 acts as the Proton donor/acceptor in catalysis. The Nucleophile role is filled by serine 409.

Belongs to the peptidase S49 family. In terms of assembly, homotetramer.

The protein resides in the cell inner membrane. Its function is as follows. Digests cleaved signal peptides in vitro, its in vivo function is unknown. This activity is necessary to maintain proper secretion of mature proteins across the membrane. This Salmonella typhi protein is Protease 4 (sppA).